A 231-amino-acid chain; its full sequence is Deoxyribose-phosphate aldolase (231 aa).

Asp86 (proton donor/acceptor) is an active-site residue. The active-site Schiff-base intermediate with acetaldehyde is the Lys147. Lys172 acts as the Proton donor/acceptor in catalysis. Positions 206-231 (WQAETAGETVTEPESDRDGADTTDGY) are disordered.

Belongs to the DeoC/FbaB aldolase family. DeoC type 1 subfamily.

Its subcellular location is the cytoplasm. The catalysed reaction is 2-deoxy-D-ribose 5-phosphate = D-glyceraldehyde 3-phosphate + acetaldehyde. The protein operates within carbohydrate degradation; 2-deoxy-D-ribose 1-phosphate degradation; D-glyceraldehyde 3-phosphate and acetaldehyde from 2-deoxy-alpha-D-ribose 1-phosphate: step 2/2. Functionally, catalyzes a reversible aldol reaction between acetaldehyde and D-glyceraldehyde 3-phosphate to generate 2-deoxy-D-ribose 5-phosphate. The chain is Deoxyribose-phosphate aldolase from Haloarcula marismortui (strain ATCC 43049 / DSM 3752 / JCM 8966 / VKM B-1809) (Halobacterium marismortui).